A 442-amino-acid chain; its full sequence is Elongation factor 1-alpha 1 (442 aa).

One can recognise a tr-type G domain in the interval 5-227; that stretch reads KEHLNLVVIG…AALDSFKIPK (223 aa). A G1 region spans residues 14–21; the sequence is GHVDSGKS. Residue 14–21 participates in GTP binding; it reads GHVDSGKS. The segment at 70–74 is G2; sequence GITID. Positions 91–94 are G3; the sequence is DAPG. GTP contacts are provided by residues 91-95 and 153-156; these read DAPGH and NKMD. The segment at 153–156 is G4; that stretch reads NKMD. The G5 stretch occupies residues 194–196; it reads SGF.

Belongs to the TRAFAC class translation factor GTPase superfamily. Classic translation factor GTPase family. EF-Tu/EF-1A subfamily.

It is found in the cytoplasm. Functionally, this protein promotes the GTP-dependent binding of aminoacyl-tRNA to the A-site of ribosomes during protein biosynthesis. The chain is Elongation factor 1-alpha 1 (EFA1) from Euplotes crassus.